The sequence spans 237 residues: Uridylate kinase (237 aa).

Residue 9–12 (KLSG) participates in ATP binding. The interval 17 to 22 (GSQGYG) is involved in allosteric activation by GTP. Glycine 51 is a UMP binding site. The ATP site is built by glycine 52 and arginine 56. Residues aspartate 71 and 132 to 139 (CGNPFFTT) contribute to the UMP site. Threonine 159, tyrosine 165, and aspartate 168 together coordinate ATP.

Belongs to the UMP kinase family. Homohexamer.

Its subcellular location is the cytoplasm. It carries out the reaction UMP + ATP = UDP + ADP. It participates in pyrimidine metabolism; CTP biosynthesis via de novo pathway; UDP from UMP (UMPK route): step 1/1. Allosterically activated by GTP. Inhibited by UTP. Catalyzes the reversible phosphorylation of UMP to UDP. This is Uridylate kinase from Synechococcus sp. (strain CC9605).